The chain runs to 200 residues: Putative 3-methyladenine DNA glycosylase (200 aa).

The protein belongs to the DNA glycosylase MPG family.

The sequence is that of Putative 3-methyladenine DNA glycosylase from Bradyrhizobium diazoefficiens (strain JCM 10833 / BCRC 13528 / IAM 13628 / NBRC 14792 / USDA 110).